The following is a 145-amino-acid chain: MIKYFDKNNEVFNLIKDLTGRLNVEILEINIFRNKNNGKIQIVLYSKNFSLDIDFLTDLHKIILLILEANLKYGFTLELSTPGIDRKIKSDREFKIFEGKKIKLMLDNEFEEGFILESKPKSFIFKTDSKEVNVFYSDVKKARLV.

The protein belongs to the RimP family.

It is found in the cytoplasm. Its function is as follows. Required for maturation of 30S ribosomal subunits. This chain is Ribosome maturation factor RimP, found in Borreliella burgdorferi (strain ZS7) (Borrelia burgdorferi).